We begin with the raw amino-acid sequence, 735 residues long: Phosphoribosylformylglycinamidine synthase subunit PurL (735 aa).

Histidine 48 is an active-site residue. Residues tyrosine 51 and lysine 90 each contribute to the ATP site. Residue glutamate 92 coordinates Mg(2+). Substrate-binding positions include 93–96 (SHNH) and arginine 115. Catalysis depends on histidine 94, which acts as the Proton acceptor. Aspartate 116 lines the Mg(2+) pocket. Substrate is bound at residue glutamine 239. Residue aspartate 267 participates in Mg(2+) binding. 311–313 (ESQ) contacts substrate. 2 residues coordinate ATP: aspartate 492 and glycine 529. Asparagine 530 provides a ligand contact to Mg(2+). Serine 532 provides a ligand contact to substrate.

Belongs to the FGAMS family. In terms of assembly, monomer. Part of the FGAM synthase complex composed of 1 PurL, 1 PurQ and 2 PurS subunits.

It is found in the cytoplasm. It catalyses the reaction N(2)-formyl-N(1)-(5-phospho-beta-D-ribosyl)glycinamide + L-glutamine + ATP + H2O = 2-formamido-N(1)-(5-O-phospho-beta-D-ribosyl)acetamidine + L-glutamate + ADP + phosphate + H(+). It functions in the pathway purine metabolism; IMP biosynthesis via de novo pathway; 5-amino-1-(5-phospho-D-ribosyl)imidazole from N(2)-formyl-N(1)-(5-phospho-D-ribosyl)glycinamide: step 1/2. In terms of biological role, part of the phosphoribosylformylglycinamidine synthase complex involved in the purines biosynthetic pathway. Catalyzes the ATP-dependent conversion of formylglycinamide ribonucleotide (FGAR) and glutamine to yield formylglycinamidine ribonucleotide (FGAM) and glutamate. The FGAM synthase complex is composed of three subunits. PurQ produces an ammonia molecule by converting glutamine to glutamate. PurL transfers the ammonia molecule to FGAR to form FGAM in an ATP-dependent manner. PurS interacts with PurQ and PurL and is thought to assist in the transfer of the ammonia molecule from PurQ to PurL. The chain is Phosphoribosylformylglycinamidine synthase subunit PurL from Bradyrhizobium sp. (strain BTAi1 / ATCC BAA-1182).